The primary structure comprises 346 residues: fMet-Leu-Phe receptor (346 aa).

Asparagine 1 and asparagine 7 each carry an N-linked (GlcNAc...) asparagine glycan. The Extracellular segment spans residues 1 to 24 (NSSLPTNISGGTPAVSAGYLFLDI). The chain crosses the membrane as a helical span at residues 25-47 (ITYLVYAVTFVLGVLGNGLVIWV). At 48–58 (AGFRMTHTVTT) the chain is on the cytoplasmic side. The chain crosses the membrane as a helical span at residues 59-80 (ISYLNLAVADFCFTSTLPFFMV). Over 81–97 (RKAMGGHWPFGWFLCKF) the chain is Extracellular. Cysteine 95 and cysteine 173 are disulfide-bonded. A helical membrane pass occupies residues 98–118 (IFTIVDINLFGSVFLIALIAL). The Cytoplasmic portion of the chain corresponds to 119–137 (DRCVCVLHPVWTQNHRTVS). The chain crosses the membrane as a helical span at residues 138–159 (LAKKVIIGPWVMALLLTLPVII). Topologically, residues 160–202 (RVTTVPGKMGTVSCTFNFSPWTNDPKERIKVAIAMLTVRGIIR) are extracellular. A helical membrane pass occupies residues 203–223 (FIIGFSAPMSIVAVSYGLIAT). Residues 224–239 (KIHKQGLIKSSRPLRV) lie on the Cytoplasmic side of the membrane. The chain crosses the membrane as a helical span at residues 240-263 (LSFVAAAFFLCWSPYQVVAFIATV). The Extracellular portion of the chain corresponds to 264 to 282 (RIRELLQGMYKEISIAVDV). The helical transmembrane segment at 283-302 (TSALAFFNSCLNPMLYVFMG) threads the bilayer. The Cytoplasmic segment spans residues 303-346 (QDFRERLIHSLPASLERALTEASTQTSDTATNSTLPSAEVALQA). Over residues 324–338 (ASTQTSDTATNSTLP) the composition is skewed to polar residues. Residues 324 to 346 (ASTQTSDTATNSTLPSAEVALQA) are disordered.

It belongs to the G-protein coupled receptor 1 family. Post-translationally, phosphorylated; which is necessary for desensitization.

The protein resides in the cell membrane. Its function is as follows. High affinity receptor for N-formyl-methionyl peptides (fMLP), which are powerful neutrophil chemotactic factors. Binding of fMLP to the receptor stimulates intracellular calcium mobilization and superoxide anion release. This response is mediated via a G-protein that activates a phosphatidylinositol-calcium second messenger system. Receptor for TAFA4, mediates its effects on chemoattracting macrophages, promoting phagocytosis and increasing ROS release. Receptor for cathepsin CTSG, leading to increased phagocyte chemotaxis. The protein is fMet-Leu-Phe receptor (FPR1) of Pongo pygmaeus (Bornean orangutan).